Here is a 541-residue protein sequence, read N- to C-terminus: Reticulophagy regulator 2 (541 aa).

The next 3 helical transmembrane spans lie at 75-91, 99-115, and 199-219; these read LHSL…FWLL, FFLL…LDLW, and VPGI…PLVV. The segment at 249 to 282 is disordered; it reads LHHKHDKRKRQGKNAPPAGDEPLAETESESEAEL. The segment covering 250–260 has biased composition (basic residues); sequence HHKHDKRKRQG. Positions 270–280 are enriched in acidic residues; it reads PLAETESESEA. Position 274 is a phosphothreonine (Thr274). Phosphoserine occurs at positions 276, 278, 286, and 306. Thr329 is subject to Phosphothreonine. Disordered stretches follow at residues 331 to 389, 403 to 440, and 459 to 481; these read VSED…ADKE, THFN…APSS, and PSVL…EEEA. Residues Ser332, Ser339, and Ser342 each carry the phosphoserine modification. A compositionally biased stretch (low complexity) spans 459-475; that stretch reads PSVLPSLPQDSPQALTA. The LIR motif signature appears at 485 to 490; sequence EDFELL. The segment at 496 to 541 is disordered; that stretch reads EQLNAELGLGPEMPPKPPDVLPPPPLGPDSHSLVQSDQEAHAVVEP. A compositionally biased stretch (pro residues) spans 507 to 522; the sequence is EMPPKPPDVLPPPPLG.

This sequence belongs to the RETREG family. In terms of assembly, interacts with ATG8 family modifier proteins MAP1LC3A, MAP1LC3B, GABARAP, GABARAPL1 and GABARAPL2. Interacts with CANX.

The protein localises to the endoplasmic reticulum membrane. Functionally, endoplasmic reticulum (ER)-anchored autophagy regulator which exists in an inactive state under basal conditions but is activated following cellular stress. When activated, induces ER fragmentation and mediates ER delivery into lysosomes through sequestration into autophagosomes via interaction with ATG8 family proteins. Required for collagen quality control in a LIR motif-independent manner. The chain is Reticulophagy regulator 2 (Retreg2) from Rattus norvegicus (Rat).